Reading from the N-terminus, the 371-residue chain is Putative glutamate--cysteine ligase 2 (371 aa).

Belongs to the glutamate--cysteine ligase type 2 family. YbdK subfamily.

The enzyme catalyses L-cysteine + L-glutamate + ATP = gamma-L-glutamyl-L-cysteine + ADP + phosphate + H(+). ATP-dependent carboxylate-amine ligase which exhibits weak glutamate--cysteine ligase activity. The polypeptide is Putative glutamate--cysteine ligase 2 (Burkholderia multivorans (strain ATCC 17616 / 249)).